The following is a 151-amino-acid chain: Ribosomal RNA large subunit methyltransferase H (151 aa).

Residues leucine 73, glycine 100, and 119 to 124 (LSKMTL) each bind S-adenosyl-L-methionine.

Belongs to the RNA methyltransferase RlmH family. In terms of assembly, homodimer.

It is found in the cytoplasm. It carries out the reaction pseudouridine(1915) in 23S rRNA + S-adenosyl-L-methionine = N(3)-methylpseudouridine(1915) in 23S rRNA + S-adenosyl-L-homocysteine + H(+). In terms of biological role, specifically methylates the pseudouridine at position 1915 (m3Psi1915) in 23S rRNA. This chain is Ribosomal RNA large subunit methyltransferase H, found in Campylobacter lari (strain RM2100 / D67 / ATCC BAA-1060).